The sequence spans 319 residues: Tyrosine phosphatase-like protein N3 (319 aa).

In terms of domain architecture, Tyrosine-protein phosphatase spans S7–S285.

The protein belongs to the protein-tyrosine phosphatase family.

In Microplitis demolitor bracovirus (isolate Webb) (MdBV), this protein is Tyrosine phosphatase-like protein N3 (N7).